The sequence spans 440 residues: Trigger factor (440 aa).

The region spanning 162-247 is the PPIase FKBP-type domain; sequence GDRVTFDFTG…LKKIEKFQLP (86 aa).

It belongs to the FKBP-type PPIase family. Tig subfamily.

The protein resides in the cytoplasm. The catalysed reaction is [protein]-peptidylproline (omega=180) = [protein]-peptidylproline (omega=0). Functionally, involved in protein export. Acts as a chaperone by maintaining the newly synthesized protein in an open conformation. Functions as a peptidyl-prolyl cis-trans isomerase. In Hamiltonella defensa subsp. Acyrthosiphon pisum (strain 5AT), this protein is Trigger factor.